The following is a 229-amino-acid chain: GTP cyclohydrolase 1 (229 aa).

The tract at residues 1–31 (MFRESDNTIAPSNQDLNKPVVDKEQPAERTP) is disordered. Polar residues predominate over residues 7–16 (NTIAPSNQDL). The Zn(2+) site is built by cysteine 117, histidine 120, and cysteine 188.

Belongs to the GTP cyclohydrolase I family. Toroid-shaped homodecamer, composed of two pentamers of five dimers.

It catalyses the reaction GTP + H2O = 7,8-dihydroneopterin 3'-triphosphate + formate + H(+). It functions in the pathway cofactor biosynthesis; 7,8-dihydroneopterin triphosphate biosynthesis; 7,8-dihydroneopterin triphosphate from GTP: step 1/1. This is GTP cyclohydrolase 1 from Rhodopirellula baltica (strain DSM 10527 / NCIMB 13988 / SH1).